A 695-amino-acid polypeptide reads, in one-letter code: Ubiquitin carboxyl-terminal hydrolase 20 (695 aa).

Disordered regions lie at residues 1 to 20 and 42 to 162; these read MLMA…SSIL and SLAL…SLFY. Composition is skewed to low complexity over residues 9-20 and 61-86; these read PSSILPRSSSIL and NHDS…SQSV. A compositionally biased stretch (acidic residues) spans 112–124; sequence DDIDDDIWGDDDL. The 301-residue stretch at 176-476 folds into the USP domain; it reads AGLWNLGNSC…DSYILFYARE (301 aa). C185 functions as the Nucleophile in the catalytic mechanism. H435 functions as the Proton acceptor in the catalytic mechanism. Positions 556–571 are enriched in low complexity; that stretch reads SAESSSGEESPMGELL. Disordered regions lie at residues 556 to 585 and 674 to 695; these read SAES…PCTE and AREL…LKTT.

Belongs to the peptidase C19 family.

It carries out the reaction Thiol-dependent hydrolysis of ester, thioester, amide, peptide and isopeptide bonds formed by the C-terminal Gly of ubiquitin (a 76-residue protein attached to proteins as an intracellular targeting signal).. Recognizes and hydrolyzes the peptide bond at the C-terminal Gly of ubiquitin. Involved in the processing of poly-ubiquitin precursors as well as that of ubiquitinated proteins. The chain is Ubiquitin carboxyl-terminal hydrolase 20 (UBP20) from Arabidopsis thaliana (Mouse-ear cress).